A 692-amino-acid polypeptide reads, in one-letter code: Polyribonucleotide nucleotidyltransferase (692 aa).

Residues Asp-484 and Asp-490 each coordinate Mg(2+). One can recognise a KH domain in the interval 551-610 (PRIITIQINPDRIRDVIGPGGKVIRALTEETGATIDIQDNGTVTIASVDGEAGAAAKRRI). An S1 motif domain is found at 620–688 (DTIYDGKVAK…RQGKIKLSMK (69 aa)).

Belongs to the polyribonucleotide nucleotidyltransferase family. Component of the RNA degradosome, which is a multiprotein complex involved in RNA processing and mRNA degradation. Mg(2+) is required as a cofactor.

It is found in the cytoplasm. The enzyme catalyses RNA(n+1) + phosphate = RNA(n) + a ribonucleoside 5'-diphosphate. In terms of biological role, involved in mRNA degradation. Catalyzes the phosphorolysis of single-stranded polyribonucleotides processively in the 3'- to 5'-direction. This Acidithiobacillus ferrooxidans (strain ATCC 53993 / BNL-5-31) (Leptospirillum ferrooxidans (ATCC 53993)) protein is Polyribonucleotide nucleotidyltransferase.